Reading from the N-terminus, the 150-residue chain is uncharacterized protein (150 aa).

One can recognise an HTH marR-type domain in the interval 1-133; that stretch reads MNDILREIGM…ISALLHRVRK (133 aa). Positions 47–70 form a DNA-binding region, H-T-H motif; the sequence is QEKLAEMIKVDRTTAARAIKKLEM.

This is an uncharacterized protein from Bacillus subtilis (strain 168).